A 118-amino-acid chain; its full sequence is UPF0295 protein BCE33L0445 (118 aa).

The next 2 helical transmembrane spans lie at 12–32 (IRTF…LGVF) and 43–63 (FMMV…WIGM).

The protein belongs to the UPF0295 family.

It localises to the cell membrane. This chain is UPF0295 protein BCE33L0445, found in Bacillus cereus (strain ZK / E33L).